A 368-amino-acid polypeptide reads, in one-letter code: MKNKFDTLTVETGVKSKKKYPIYIGKAILNLLDKVIPRNVSVLIVIDSRIARLHRDKITRLIEFLTESRTVNQIIIPGEEDSKSLSVSESLYEKAASLNLDRSSWFIGIGGGVVGDLTGFVAATYMRGANLLHVPTTLLAQVDSSVGGKVAINQSGYKNLVGNFYQPKAVIIDTNFLDTLPIRELRAGLAEVFKYGILCDRELFLTVKSLFEDCEPLNNVSWERYSYLIHKSCEIKADIVSQDEIDTGIRMLLNLGHTFAHALEGATSYNYFKHGEAVMWGLAMSAELSYKLNKLTYKDYQAIAELPELTKVPEVPIQVKDPNIIEELLLRDKKKTGEELTVILPTSIGSAEICKCPATALIKVILES.

Residues 112-116 (GVVGD), 136-137 (TT), Lys-149, Lys-158, and 176-179 (FLDT) each bind NAD(+). Zn(2+)-binding residues include Glu-191, His-257, and His-274.

This sequence belongs to the sugar phosphate cyclases superfamily. Dehydroquinate synthase family. The cofactor is Co(2+). It depends on Zn(2+) as a cofactor. Requires NAD(+) as cofactor.

The protein localises to the cytoplasm. It carries out the reaction 7-phospho-2-dehydro-3-deoxy-D-arabino-heptonate = 3-dehydroquinate + phosphate. It functions in the pathway metabolic intermediate biosynthesis; chorismate biosynthesis; chorismate from D-erythrose 4-phosphate and phosphoenolpyruvate: step 2/7. Functionally, catalyzes the conversion of 3-deoxy-D-arabino-heptulosonate 7-phosphate (DAHP) to dehydroquinate (DHQ). This Natranaerobius thermophilus (strain ATCC BAA-1301 / DSM 18059 / JW/NM-WN-LF) protein is 3-dehydroquinate synthase.